The chain runs to 83 residues: MKASMFLALAGLVLLFVVGYASGSEEKEFPRELLSKIFAVDDFKGEERGCKGFGDSCTPGKNECCPNYACSSKHKWCKVYLGK.

A signal peptide spans 1-21; it reads MKASMFLALAGLVLLFVVGYA. Residues 22 to 48 constitute a propeptide that is removed on maturation; the sequence is SGSEEKEFPRELLSKIFAVDDFKGEER. Cystine bridges form between C50–C65, C57–C70, and C64–C77. Position 81 is a leucine amide (L81).

The protein belongs to the neurotoxin 10 (Hwtx-1) family. 15 (Hntx-3) subfamily. Monomer. In terms of tissue distribution, expressed by the venom gland.

The protein localises to the secreted. Its function is as follows. Selective antagonist of neuronal tetrodotoxin (TTX)-sensitive voltage-gated sodium channels (IC(50)=1270 nM on Nav1.1/SCN1A, 270 nM on Nav1.2/SCN2A, 491 nM on Nav1.3/SCN3A and 232 nM on Nav1.7/SCN9A). This toxin suppress Nav1.7 current amplitude without significantly altering the activation, inactivation, and repriming kinetics. Short extreme depolarizations partially activate the toxin-bound channel, indicating voltage-dependent inhibition of this toxin. This toxin increases the deactivation of the Nav1.7 current after extreme depolarizations. The toxin-Nav1.7 complex is gradually dissociated upon prolonged strong depolarizations in a voltage-dependent manner, and the unbound toxin rebinds to Nav1.7 after a long repolarization. Moreover, analysis of chimeric channels showed that the DIIS3-S4 linker is critical for toxin binding to Nav1.7. These data are consistent with this toxin interacting with Nav1.7 site 4 and trapping the domain II voltage sensor in the closed state. This chain is Hainantoxin-III 12, found in Cyriopagopus hainanus (Chinese bird spider).